Reading from the N-terminus, the 129-residue chain is uncharacterized protein (129 aa).

A disordered region spans residues 1–129 (MWLWQDIQCC…HTSNGRTGDL (129 aa)). Residues 87-100 (KGADTRRLPRETRP) are compositionally biased toward basic and acidic residues. The segment covering 119 to 129 (PHTSNGRTGDL) has biased composition (polar residues).

This is an uncharacterized protein from Homo sapiens (Human).